We begin with the raw amino-acid sequence, 91 residues long: Large ribosomal subunit protein uL23 (91 aa).

It belongs to the universal ribosomal protein uL23 family. As to quaternary structure, part of the 50S ribosomal subunit. Contacts protein L29, and trigger factor when it is bound to the ribosome.

In terms of biological role, one of the early assembly proteins it binds 23S rRNA. One of the proteins that surrounds the polypeptide exit tunnel on the outside of the ribosome. Forms the main docking site for trigger factor binding to the ribosome. This chain is Large ribosomal subunit protein uL23, found in Staphylococcus aureus (strain USA300).